The chain runs to 388 residues: Na(+)/H(+) antiporter NhaA (388 aa).

Over 1–11 (MKHLHRFFSSD) the chain is Cytoplasmic. Residues 12–31 (ASGGIILIIAAVLAMIMANS) traverse the membrane as a helical segment. At 32 to 58 (GATSGWYHDFLETPVQLRVGTLEINKN) the chain is on the periplasmic side. A helical membrane pass occupies residues 59 to 80 (MLLWINDALMAVFFLLVGLEVK). At 81–96 (RELMQGSLASLRQAAF) the chain is on the cytoplasmic side. Residues 97–116 (PVIAAIGGMIVPALLYLAFN) form a helical membrane-spanning segment. Residues 117-122 (YADPIT) are Periplasmic-facing. Residues 123 to 130 (REGWAIPA) traverse the membrane as a helical segment. The Cytoplasmic portion of the chain corresponds to 131–154 (ATDIAFALGVLALLGSRVPLALKI). A helical membrane pass occupies residues 155 to 176 (FLMALAIIDDLGAIIIIALFYT). The Periplasmic segment spans residues 177–180 (NDLS). A helical membrane pass occupies residues 181-200 (MASLGVAAVAIAVLAVLNLC). Residues 201–204 (GVRR) lie on the Cytoplasmic side of the membrane. Residues 205–222 (TGVYILVGVVLWTAVLKS) form a helical membrane-spanning segment. Gly223 is a topological domain (periplasmic). The chain crosses the membrane as a helical span at residues 224–236 (VHATLAGVIVGFF). Over 237–253 (IPLKEKHGRSPAKRLEH) the chain is Cytoplasmic. A helical membrane pass occupies residues 254–272 (VLHPWVAYLILPLFAFANA). Residues 273 to 286 (GVSLQGVTLEGLTS) are Periplasmic-facing. A helical membrane pass occupies residues 287–310 (ILPLGIIAGLLIGKPLGISLFCWL). Over 311–339 (ALRLKLAHLPEGTTYQQIMAVGILCGIGF) the chain is Cytoplasmic. Residues 340 to 350 (TMSIFIASLAF) traverse the membrane as a helical segment. The Periplasmic portion of the chain corresponds to 351-357 (GSVDPEL). Residues 358–380 (INWAKLGILVGSISSAVIGYSWL) form a helical membrane-spanning segment. Residues 381-388 (RVRLRPSV) are Cytoplasmic-facing.

This sequence belongs to the NhaA Na(+)/H(+) (TC 2.A.33) antiporter family.

Its subcellular location is the cell inner membrane. It carries out the reaction Na(+)(in) + 2 H(+)(out) = Na(+)(out) + 2 H(+)(in). In terms of biological role, na(+)/H(+) antiporter that extrudes sodium in exchange for external protons. In Escherichia coli O6:K15:H31 (strain 536 / UPEC), this protein is Na(+)/H(+) antiporter NhaA.